The following is a 251-amino-acid chain: Probable transcriptional regulatory protein Cpar_0525 (251 aa).

The protein belongs to the TACO1 family.

The protein localises to the cytoplasm. This is Probable transcriptional regulatory protein Cpar_0525 from Chlorobaculum parvum (strain DSM 263 / NCIMB 8327) (Chlorobium vibrioforme subsp. thiosulfatophilum).